Reading from the N-terminus, the 442-residue chain is MFS transporter asaE (442 aa).

The span at 1–10 shows a compositional bias: polar residues; sequence MDRSRTSSQG. Residues 1–43 form a disordered region; that stretch reads MDRSRTSSQGRDVLPPRGDEGRISPSLDKEKSPGPEDQPDAPP. A compositionally biased stretch (basic and acidic residues) spans 17-34; it reads RGDEGRISPSLDKEKSPG. A run of 12 helical transmembrane segments spans residues 47 to 67, 89 to 109, 119 to 139, 150 to 170, 177 to 197, 206 to 226, 252 to 272, 288 to 307, 319 to 339, 342 to 362, 381 to 401, and 413 to 433; these read LTAWLVVVGAWCTSFCSFGWV, TISWIPSLQIFFMFAMGPIVG, YLIIGGTFFHVFGLMMASIST, ICSAIGAAAIFQPALSAVSAW, IAFATLSTGSSVGGVIFPIMV, FGWSMRISAFMILFLLGIAIV, PVFIVTLLGYMLLTYGVFIPI, LASYLVPMLNGASLFGRLGA, IFIVMCIVAGVLVLALWIPAT, APIIVFATLFGFASGAYVSLS, LLFLFASVGGLTTSPIAGAIL, and IFSGVMLLGGTAFIITARIVG.

The protein belongs to the major facilitator superfamily. Monocarboxylate porter (TC 2.A.1.13) family.

The protein localises to the cell membrane. The protein operates within secondary metabolite biosynthesis. In terms of biological role, MFS transporter; part of the gene cluster that mediates the biosynthesis of aspergillic acid. Probably involved in aspergillic acid metabolism and transport. The sequence is that of MFS transporter asaE from Aspergillus flavus (strain ATCC 200026 / FGSC A1120 / IAM 13836 / NRRL 3357 / JCM 12722 / SRRC 167).